Here is a 255-residue protein sequence, read N- to C-terminus: F-box only protein 44 (255 aa).

One can recognise an F-box domain in the interval 3–50 (VGNINELPENILLELFIHIPARQLLLRCRPVCSLWRDLIDLVTLWKRK). Residues 71–252 (FYFLRSLQRN…VTNSSITIGP (182 aa)) enclose the FBA domain.

In terms of assembly, part of a SCF (SKP1-cullin-F-box) protein ligase complex. Interacts with SKP1 and CUL1. In terms of tissue distribution, expressed in brain, liver, pancreas and adipose tissue (at protein level). Widely expressed.

Functionally, substrate-recognition component of the SCF (SKP1-CUL1-F-box protein)-type E3 ubiquitin ligase complex. This is F-box only protein 44 (Fbxo44) from Mus musculus (Mouse).